Reading from the N-terminus, the 61-residue chain is Large ribosomal subunit protein uL29 (61 aa).

This sequence belongs to the universal ribosomal protein uL29 family.

This is Large ribosomal subunit protein uL29 from Stenotrophomonas maltophilia (strain R551-3).